Here is a 201-residue protein sequence, read N- to C-terminus: MASGDDSPIFEDDESPLCSLEKMTDLVAVWDVALSDGVHKIEFEHGTTSGKRVVYVDGKEEIRREWMFKLVGKETFFVGAAKTKATINIDAISGFAYEYTLEIDGKSLKKYMENRSKTTNTWVLHLDGEELRVVLEKDTMDVWCNGQRMETAGEFVDDGTETHFSVGNHDCYIKAVSSGKRREGIIHTLIVDNREIPELTQ.

This sequence belongs to the FAIM1 family.

Its subcellular location is the cytoplasm. Functionally, plays a role as an inducible effector molecule that mediates Fas resistance produced by surface Ig engagement in B cells. The protein is Fas apoptotic inhibitory molecule 1 (Faim) of Rattus norvegicus (Rat).